We begin with the raw amino-acid sequence, 933 residues long: Isoleucine--tRNA ligase (933 aa).

The 'HIGH' region signature appears at 57-67; it reads PYANGNIHMGH. Glutamate 556 lines the L-isoleucyl-5'-AMP pocket. The 'KMSKS' region signature appears at 597-601; the sequence is KMSKS. Lysine 600 provides a ligand contact to ATP. Zn(2+) contacts are provided by cysteine 891, cysteine 894, cysteine 911, and cysteine 914.

The protein belongs to the class-I aminoacyl-tRNA synthetase family. IleS type 1 subfamily. Monomer. The cofactor is Zn(2+).

Its subcellular location is the cytoplasm. The enzyme catalyses tRNA(Ile) + L-isoleucine + ATP = L-isoleucyl-tRNA(Ile) + AMP + diphosphate. Its function is as follows. Catalyzes the attachment of isoleucine to tRNA(Ile). As IleRS can inadvertently accommodate and process structurally similar amino acids such as valine, to avoid such errors it has two additional distinct tRNA(Ile)-dependent editing activities. One activity is designated as 'pretransfer' editing and involves the hydrolysis of activated Val-AMP. The other activity is designated 'posttransfer' editing and involves deacylation of mischarged Val-tRNA(Ile). The sequence is that of Isoleucine--tRNA ligase from Pediococcus pentosaceus (strain ATCC 25745 / CCUG 21536 / LMG 10740 / 183-1w).